Reading from the N-terminus, the 341-residue chain is Ketol-acid reductoisomerase (NADP(+)) (341 aa).

The KARI N-terminal Rossmann domain maps to 2-181 (AKVYYNGDAN…GAARAGVLET (180 aa)). Residues 25–28 (YGSQ), R48, S52, and 82–85 (DEKQ) contribute to the NADP(+) site. The active site involves H107. G133 is an NADP(+) binding site. The 146-residue stretch at 182-327 (TFKEETETDL…RELRSMMPFV (146 aa)) folds into the KARI C-terminal knotted domain. Mg(2+) contacts are provided by D190, E194, E226, and E230. A substrate-binding site is contributed by S251.

It belongs to the ketol-acid reductoisomerase family. The cofactor is Mg(2+).

The enzyme catalyses (2R)-2,3-dihydroxy-3-methylbutanoate + NADP(+) = (2S)-2-acetolactate + NADPH + H(+). The catalysed reaction is (2R,3R)-2,3-dihydroxy-3-methylpentanoate + NADP(+) = (S)-2-ethyl-2-hydroxy-3-oxobutanoate + NADPH + H(+). It participates in amino-acid biosynthesis; L-isoleucine biosynthesis; L-isoleucine from 2-oxobutanoate: step 2/4. The protein operates within amino-acid biosynthesis; L-valine biosynthesis; L-valine from pyruvate: step 2/4. Functionally, involved in the biosynthesis of branched-chain amino acids (BCAA). Catalyzes an alkyl-migration followed by a ketol-acid reduction of (S)-2-acetolactate (S2AL) to yield (R)-2,3-dihydroxy-isovalerate. In the isomerase reaction, S2AL is rearranged via a Mg-dependent methyl migration to produce 3-hydroxy-3-methyl-2-ketobutyrate (HMKB). In the reductase reaction, this 2-ketoacid undergoes a metal-dependent reduction by NADPH to yield (R)-2,3-dihydroxy-isovalerate. The sequence is that of Ketol-acid reductoisomerase (NADP(+)) from Geobacillus thermodenitrificans (strain NG80-2).